The chain runs to 84 residues: Small ribosomal subunit protein bS16 (84 aa).

The protein belongs to the bacterial ribosomal protein bS16 family.

The chain is Small ribosomal subunit protein bS16 from Deinococcus radiodurans (strain ATCC 13939 / DSM 20539 / JCM 16871 / CCUG 27074 / LMG 4051 / NBRC 15346 / NCIMB 9279 / VKM B-1422 / R1).